A 1226-amino-acid chain; its full sequence is Methionine synthase (1226 aa).

The Hcy-binding domain maps to 6–326 (RQQIEAQLKQ…EHIRQMAQAV (321 aa)). Zn(2+) contacts are provided by Cys-248, Cys-311, and Cys-312. The Pterin-binding domain maps to 357 to 618 (FINVGERTNV…VPEKLREAVE (262 aa)). The 95-residue stretch at 651–745 (SALEWRTWPV…FINAEKQSGS (95 aa)) folds into the B12-binding N-terminal domain. Methylcob(III)alamin contacts are provided by residues Glu-695, 757–761 (GDVHD), His-760, Ser-805, Thr-809, and Ala-861. Positions 747–882 (NGKILLATVK…SDERRPAFIE (136 aa)) constitute a B12-binding domain. The 329-residue stretch at 898-1226 (KKPRTKPVTL…EKWLGPNING (329 aa)) folds into the AdoMet activation domain. S-adenosyl-L-methionine contacts are provided by residues Asp-948, Arg-1136, and 1191 to 1192 (YF).

It belongs to the vitamin-B12 dependent methionine synthase family. It depends on methylcob(III)alamin as a cofactor. Requires Zn(2+) as cofactor.

It carries out the reaction (6S)-5-methyl-5,6,7,8-tetrahydrofolate + L-homocysteine = (6S)-5,6,7,8-tetrahydrofolate + L-methionine. The protein operates within amino-acid biosynthesis; L-methionine biosynthesis via de novo pathway; L-methionine from L-homocysteine (MetH route): step 1/1. Catalyzes the transfer of a methyl group from methyl-cobalamin to homocysteine, yielding enzyme-bound cob(I)alamin and methionine. Subsequently, remethylates the cofactor using methyltetrahydrofolate. The protein is Methionine synthase (metH) of Vibrio parahaemolyticus serotype O3:K6 (strain RIMD 2210633).